Reading from the N-terminus, the 511-residue chain is Glucans biosynthesis protein G (511 aa).

The first 22 residues, 1–22, serve as a signal peptide directing secretion; the sequence is MMKMRWLSAAVMLTLYTSSSWA.

Belongs to the OpgD/OpgG family.

Its subcellular location is the periplasm. It participates in glycan metabolism; osmoregulated periplasmic glucan (OPG) biosynthesis. Its function is as follows. Involved in the biosynthesis of osmoregulated periplasmic glucans (OPGs). This chain is Glucans biosynthesis protein G, found in Escherichia coli O8 (strain IAI1).